Consider the following 170-residue polypeptide: MARLNVLVYPDERLKIIAKPVVEVNDEIREIVDNMFETMYLEEGIGLAATQVNIHQRIITIDVEGTKENQYVLINPEIIDSCGETGIEEGCLSLPGFRGFVPRKEKVTIKALDRHGEEYTLSAEGLLAICIQHEIDHLNGIVFADYLSPLKRQRMKEKLLKLQKQLARQK.

Residues cysteine 91 and histidine 133 each contribute to the Fe cation site. Residue glutamate 134 is part of the active site. Histidine 137 lines the Fe cation pocket.

This sequence belongs to the polypeptide deformylase family. Fe(2+) serves as cofactor.

The catalysed reaction is N-terminal N-formyl-L-methionyl-[peptide] + H2O = N-terminal L-methionyl-[peptide] + formate. In terms of biological role, removes the formyl group from the N-terminal Met of newly synthesized proteins. Requires at least a dipeptide for an efficient rate of reaction. N-terminal L-methionine is a prerequisite for activity but the enzyme has broad specificity at other positions. This chain is Peptide deformylase, found in Pasteurella multocida (strain Pm70).